A 1235-amino-acid polypeptide reads, in one-letter code: Serine/threonine-protein kinase TAO2 (1235 aa).

Ser-9 carries the phosphoserine modification. The Protein kinase domain occupies 28–281; it reads FSDLREIGHG…SEVLLKHRFV (254 aa). Residues 34–42 and Lys-57 each bind ATP; that span reads IGHGSFGAV. A staurosporine-binding site is contributed by 106–108; it reads EYC. Catalysis depends on Asp-151, which acts as the Proton acceptor. Gly-155 lines the staurosporine pocket. Position 181 is a phosphoserine (Ser-181). The tract at residues 318-457 is disordered; the sequence is QEAPNGPGAE…PTSTSSSSAR (140 aa). Residues 350 to 374 show a composition bias toward low complexity; the sequence is SSHSVPSMSISASSQSSSVNSLADA. The span at 375-395 shows a compositional bias: acidic residues; it reads SDNEEEEEEEEEEEEEEEEEG. Positions 396-411 are enriched in basic and acidic residues; the sequence is PESREMAMMQEGEHTV. Ser-416 carries the phosphoserine modification. Coiled coils occupy residues 488 to 523 and 576 to 603; these read SALR…EEHS and KELA…LQEN. Position 658 is a phosphoserine (Ser-658). Positions 683-715 form a coiled coil; that stretch reads LRQHEATRELELRQLQAVQRTRAELTRLQHQTE. Residues Ser-777, Ser-825, and Ser-827 each carry the phosphoserine modification. The tract at residues 892 to 941 is disordered; that stretch reads GPVLTPVPEEEEEEEEEGGAPIGTPRDPGDGCPSPDIPPEPPPSHLRQYP. Over residues 899–909 the composition is skewed to acidic residues; that stretch reads PEEEEEEEEEG. The segment covering 926-935 has biased composition (pro residues); the sequence is PDIPPEPPPS. 3 helical membrane-spanning segments follow: residues 967-987, 989-1009, and 1014-1034; these read LLPL…GGGL, AALL…LFLC, and LPPS…VLSL. Residue Arg-1038 is modified to Phosphoserine. Transmembrane regions (helical) follow at residues 1040-1060 and 1170-1190; these read LMGV…SLAL and LASC…LLKG. The tract at residues 1210 to 1235 is disordered; the sequence is SASRQLPPGTVAGRRSQTRRALPPWR.

Belongs to the protein kinase superfamily. STE Ser/Thr protein kinase family. STE20 subfamily. In terms of assembly, self-associates. Interacts with MAP2K3 and MAP2K6. Interacts with tubulins. Interacts with MAP3K7 and interferes with MAP3K7-binding to CHUK and thus prevents NF-kappa-B activation. Isoform 2 interacts with PCDH8; this complex may also include CDH2. Mg(2+) serves as cofactor. Post-translationally, autophosphorylated. Phosphorylated by ATM. Phosphorylated on Ser-1038 by MAPK14. This phosphorylation is required PCDH8 for endocytosis.

The protein resides in the cytoplasmic vesicle membrane. Its subcellular location is the cytoplasm. It is found in the cytoskeleton. The protein localises to the cell projection. It localises to the dendrite. It catalyses the reaction L-seryl-[protein] + ATP = O-phospho-L-seryl-[protein] + ADP + H(+). The catalysed reaction is L-threonyl-[protein] + ATP = O-phospho-L-threonyl-[protein] + ADP + H(+). Its activity is regulated as follows. Moderately inhibited by staurosporine, a broad-range protein kinase inhibitor. In terms of biological role, serine/threonine-protein kinase involved in different processes such as membrane blebbing and apoptotic bodies formation DNA damage response and MAPK14/p38 MAPK stress-activated MAPK cascade. Phosphorylates itself, MBP, activated MAPK8, MAP2K3, MAP2K6 and tubulins. Activates the MAPK14/p38 MAPK signaling pathway through the specific activation and phosphorylation of the upstream MAP2K3 and MAP2K6 kinases. In response to DNA damage, involved in the G2/M transition DNA damage checkpoint by activating the p38/MAPK14 stress-activated MAPK cascade, probably by mediating phosphorylation of upstream MAP2K3 and MAP2K6 kinases. May affect microtubule organization and stability. May play a role in the osmotic stress-MAPK8 pathway. Prevents MAP3K7-mediated activation of CHUK, and thus NF-kappa-B activation. Isoform 2, but not isoform 1, is required for PCDH8 endocytosis. Following homophilic interactions between PCDH8 extracellular domains, isoform 2 phosphorylates and activates MAPK14/p38 MAPK which in turn phosphorylates isoform 2. This process leads to PCDH8 endocytosis and CDH2 cointernalization. Both isoforms are involved in MAPK14/p38 MAPK activation. The protein is Serine/threonine-protein kinase TAO2 (Taok2) of Rattus norvegicus (Rat).